The following is a 415-amino-acid chain: Homoserine O-succinyltransferase (415 aa).

A compositionally biased stretch (polar residues) spans 1 to 26 (MTSPALTAASVTPSRNTTSPDTTSHR). Residues 1-27 (MTSPALTAASVTPSRNTTSPDTTSHRP) form a disordered region. In terms of domain architecture, AB hydrolase-1 spans 71–386 (NAVLICHALN…HGHDAFLLED (316 aa)). Ser-177 functions as the Nucleophile in the catalytic mechanism. Position 247 (Arg-247) interacts with substrate. Catalysis depends on residues Asp-346 and His-379. Asp-380 serves as a coordination point for substrate.

Belongs to the AB hydrolase superfamily. MetX family. In terms of assembly, homodimer.

The protein localises to the cytoplasm. It catalyses the reaction L-homoserine + succinyl-CoA = O-succinyl-L-homoserine + CoA. Its pathway is amino-acid biosynthesis; L-methionine biosynthesis via de novo pathway; O-succinyl-L-homoserine from L-homoserine: step 1/1. Transfers a succinyl group from succinyl-CoA to L-homoserine, forming succinyl-L-homoserine. The protein is Homoserine O-succinyltransferase of Bordetella avium (strain 197N).